A 396-amino-acid polypeptide reads, in one-letter code: Proteasome-activating nucleotidase (396 aa).

The stretch at isoleucine 16–proline 57 forms a coiled coil. Residues glycine 181–leucine 186 and histidine 320 each bind ATP. Residues isoleucine 394 to glycine 396 form a docks into pockets in the proteasome alpha-ring to cause gate opening region.

Belongs to the AAA ATPase family. In terms of assembly, homohexamer. The hexameric complex has a two-ring architecture resembling a top hat that caps the 20S proteasome core at one or both ends. Upon ATP-binding, the C-terminus of PAN interacts with the alpha-rings of the proteasome core by binding to the intersubunit pockets.

The protein resides in the cytoplasm. Functionally, ATPase which is responsible for recognizing, binding, unfolding and translocation of substrate proteins into the archaeal 20S proteasome core particle. Is essential for opening the gate of the 20S proteasome via an interaction with its C-terminus, thereby allowing substrate entry and access to the site of proteolysis. Thus, the C-termini of the proteasomal ATPase function like a 'key in a lock' to induce gate opening and therefore regulate proteolysis. Unfolding activity requires energy from ATP hydrolysis, whereas ATP binding alone promotes ATPase-20S proteasome association which triggers gate opening, and supports translocation of unfolded substrates. This chain is Proteasome-activating nucleotidase, found in Pyrococcus abyssi (strain GE5 / Orsay).